Here is a 316-residue protein sequence, read N- to C-terminus: tRNA dimethylallyltransferase (316 aa).

Residue 17 to 24 coordinates ATP; it reads GPTASGKT. Position 19–24 (19–24) interacts with substrate; it reads TASGKT. Interaction with substrate tRNA regions lie at residues 42 to 45, 166 to 170, and 247 to 252; these read DSAL, QRLSR, and RCVGYR.

This sequence belongs to the IPP transferase family. In terms of assembly, monomer. It depends on Mg(2+) as a cofactor.

It catalyses the reaction adenosine(37) in tRNA + dimethylallyl diphosphate = N(6)-dimethylallyladenosine(37) in tRNA + diphosphate. Its function is as follows. Catalyzes the transfer of a dimethylallyl group onto the adenine at position 37 in tRNAs that read codons beginning with uridine, leading to the formation of N6-(dimethylallyl)adenosine (i(6)A). This chain is tRNA dimethylallyltransferase, found in Klebsiella pneumoniae (strain 342).